Here is a 258-residue protein sequence, read N- to C-terminus: Na(+)-translocating NADH-quinone reductase subunit C (258 aa).

The chain crosses the membrane as a helical span at residues 14–34 (LIVVLAVSLICSVIVAGAVVG). FMN phosphoryl serine is present on serine 226.

This sequence belongs to the NqrC family. Composed of six subunits; NqrA, NqrB, NqrC, NqrD, NqrE and NqrF. Requires FMN as cofactor.

The protein localises to the cell inner membrane. The catalysed reaction is a ubiquinone + n Na(+)(in) + NADH + H(+) = a ubiquinol + n Na(+)(out) + NAD(+). Functionally, NQR complex catalyzes the reduction of ubiquinone-1 to ubiquinol by two successive reactions, coupled with the transport of Na(+) ions from the cytoplasm to the periplasm. NqrA to NqrE are probably involved in the second step, the conversion of ubisemiquinone to ubiquinol. The protein is Na(+)-translocating NADH-quinone reductase subunit C of Neisseria meningitidis serogroup A / serotype 4A (strain DSM 15465 / Z2491).